The sequence spans 167 residues: MADEATRRVVSEIPVLKTNAGPRDRELWVQRLKEEYQSLIRYVENNKNADNDWFRLESNKEGTRWFGKCWYIHDFLKYEFDIEFEIPITYPTTAPEIAVPELDGKTAKMYRGGKICLTDHFKPLWARNVPKFGLAHLMALGLGPWLAVEVPDLIQKGVIQHKEKCNQ.

Cysteine 116 (glycyl thioester intermediate) is an active-site residue. A Glycyl lysine isopeptide (Lys-Gly) (interchain with G-Cter in UFM1) cross-link involves residue lysine 122.

It belongs to the ubiquitin-conjugating enzyme family. UFC1 subfamily. In terms of assembly, interacts with UBA5 (via C-terminus). Interacts with UFL1. Interacts with UFM1. Interacts with KIRREL3. Ufmylated at Lys-122. Deufmylated by UFSP1.

Its function is as follows. E2-like enzyme which specifically catalyzes the second step in ufmylation. Accepts the ubiquitin-like modifier UFM1 from the E1 enzyme UBA5 and forms an intermediate with UFM1 via a thioester linkage. Ufmylation is involved in various processes, such as ribosome recycling, response to DNA damage, interferon response or reticulophagy (also called ER-phagy). This Rattus norvegicus (Rat) protein is Ubiquitin-fold modifier-conjugating enzyme 1.